We begin with the raw amino-acid sequence, 543 residues long: MSEELSQKPSSAQSLSLREGRNRFPFLSLSQREGRFFPSLSLSERDGRKFSFLSMFSFLMPLLEVIKIIIASVASVIFVGFACVTLAGSAAALVVSTPVFIIFSPVLVPATIATVVLATGFTAGGSFGATALGLIMWLVKRRMGVKPKDNPPPAGLPPNSGAGAGGAQSLIKKSKAKSKGGLKAWCKKMLKSKFGGKKGKSGGGKSKFGGKGGKSEGEEGMSSGDEGMSGSEGGMSGGEGGKSKSGKGKLKAKLEKKKGMSGGSESEEGMSGSEGGMSGGGGSKSKSKKSKLKAKLGKKKGMSGGMSGSEEGMSGSEGGMSSGGGSKSKSKKSKLKAKLGKKKSMSGGMSGSEEGMSGSEGGMSGGGGGKSKSRKSKLKANLGKKKCMSGGMSGSEGGMSRSEGGISGGGMSGGSGSKHKIGGGKHGGLGGKFGKKRGMSGSGGGMSGSEGGVSGSEGSMSGGGMSGGSGSKHKIGGGKHGGLRGKFGKKRGMSGSEGGMSGSEGGMSESGMSGSGGGKHKIGGGKHKFGGGKHGGGGGHMAE.

The segment at 1–67 (MSEELSQKPS…FLMPLLEVIK (67 aa)) is polar. A run of 3 helical transmembrane segments spans residues 68–88 (IIIASVASVIFVGFACVTLAG), 98–118 (PVFIIFSPVLVPATIATVVLA), and 119–139 (TGFTAGGSFGATALGLIMWLV). A hydrophobic region spans residues 68–162 (IIIASVASVI…PAGLPPNSGA (95 aa)). Disordered regions lie at residues 148–169 (KDNPPPAGLPPNSGAGAGGAQS) and 195–543 (GGKK…HMAE). The segment covering 201–212 (SGGGKSKFGGKG) has biased composition (gly residues). A run of 3 repeats spans residues 220-223 (GMSS), 227-230 (GMSG), and 234-237 (GMSG). The segment covering 220 to 229 (GMSSGDEGMS) has biased composition (low complexity). The interval 220-514 (GMSSGDEGMS…GGMSESGMSG (295 aa)) is 29 X 4 AA approximate tandem repeats of G-M-S-G. Over residues 230–240 (GSEGGMSGGEG) the composition is skewed to gly residues. Positions 244–256 (KSGKGKLKAKLEK) are enriched in basic residues. A run of 26 repeats spans residues 259–262 (GMSG), 269–272 (GMSG), 276–279 (GMSG), 301–304 (GMSG), 305–308 (GMSG), 312–315 (GMSG), 319–322 (GMSS), 344–347 (SMSG), 348–351 (GMSG), 355–358 (GMSG), 362–365 (GMSG), 387–390 (CMSG), 391–394 (GMSG), 398–401 (GMSR), 405–408 (GISG), 410–413 (GMSG), 414–417 (GSGS), 438–441 (GMSG), 445–448 (GMSG), 458–461 (GSMS), 464–467 (GMSG), 468–471 (GSGS), 492–495 (GMSG), 499–502 (GMSG), 506–509 (GMSE), and 511–514 (GMSG). The span at 272–283 (GSEGGMSGGGGS) shows a compositional bias: gly residues. The span at 285–301 (SKSKKSKLKAKLGKKKG) shows a compositional bias: basic residues. Positions 315 to 326 (GSEGGMSSGGGS) are enriched in gly residues. A compositionally biased stretch (basic residues) spans 328–344 (SKSKKSKLKAKLGKKKS). Low complexity predominate over residues 345-357 (MSGGMSGSEEGMS). Residues 358–370 (GSEGGMSGGGGGK) are compositionally biased toward gly residues. Positions 371–387 (SKSRKSKLKANLGKKKC) are enriched in basic residues. 2 stretches are compositionally biased toward gly residues: residues 405–416 (GISGGGMSGGSG) and 440–470 (SGSGGGMSGSEGGVSGSEGSMSGGGMSGGSG). A compositionally biased stretch (basic residues) spans 471-492 (SKHKIGGGKHGGLRGKFGKKRG). Positions 495 to 505 (GSEGGMSGSEG) are enriched in gly residues. Residues 518-531 (GKHKIGGGKHKFGG) show a composition bias toward basic residues. A compositionally biased stretch (gly residues) spans 532–543 (GKHGGGGGHMAE).

It belongs to the oleosin family. Proteolytically cleaved following anther tapetal breakdown. In terms of tissue distribution, flower specific, especially in anther tapetum, pollen (at protein level) and flowers florets.

The protein localises to the secreted. It is found in the extracellular space. It localises to the extracellular matrix. The protein resides in the pollen coat. Its subcellular location is the lipid droplet. The protein localises to the membrane. Lipid-binding oleosin pollen coat protein required to mediate pollen recognition by stigma cells and subsequent pollen hydration. Involved in anther tapetum development, especially for the physiology of tapetosomes. Also implicated in the formation of pollen coat. This is Tapetal oleosin GRP-17 from Arabidopsis thaliana (Mouse-ear cress).